Here is a 230-residue protein sequence, read N- to C-terminus: Gilatoxin (230 aa).

The 230-residue stretch at 1–230 (IIGGQECDET…ISFLFWIQSI (230 aa)) folds into the Peptidase S1 domain. Disulfide bonds link Cys7/Cys146, Cys26/Cys42, Cys125/Cys193, Cys157/Cys172, and Cys183/Cys208. The Charge relay system role is filled by His41. Asn84 is a glycosylation site (N-linked (GlcNAc...) asparagine). Asp93 acts as the Charge relay system in catalysis. The active-site Charge relay system is the Ser187.

This sequence belongs to the peptidase S1 family. In terms of processing, extensively glycosylated, contains approximately 8 mol of monosaccharide per mol of toxin. In terms of tissue distribution, expressed by the mandibular venom gland.

It is found in the secreted. Functionally, has kallikrein-like activity, releases bradykinin from kininogen. Catalyzes the hydrolysis of various arginine ester substrates for trypsin and thrombin and degrades both angiotensin I and II by cleavage of the dipeptide Asp-Arg from the NH2-terminal end. Fibrinogen is also degraded but a fibrin clot is not produced. May have a potentiating effect on potent hemorrhagic toxins present in the venom. This is Gilatoxin from Heloderma horridum horridum (Mexican beaded lizard).